The sequence spans 463 residues: ATP-dependent protease ATPase subunit HslU (463 aa).

ATP contacts are provided by residues Ile19 and 61–66; that span reads GVGKTE. The disordered stretch occupies residues 154-175; sequence FGGNQNSNQTSDAQEDDEIEKK. Residues 156 to 165 are compositionally biased toward polar residues; it reads GNQNSNQTSD. Positions 277, 341, and 413 each coordinate ATP.

Belongs to the ClpX chaperone family. HslU subfamily. In terms of assembly, a double ring-shaped homohexamer of HslV is capped on each side by a ring-shaped HslU homohexamer. The assembly of the HslU/HslV complex is dependent on binding of ATP.

The protein localises to the cytoplasm. Its function is as follows. ATPase subunit of a proteasome-like degradation complex; this subunit has chaperone activity. The binding of ATP and its subsequent hydrolysis by HslU are essential for unfolding of protein substrates subsequently hydrolyzed by HslV. HslU recognizes the N-terminal part of its protein substrates and unfolds these before they are guided to HslV for hydrolysis. In Bacillus mycoides (strain KBAB4) (Bacillus weihenstephanensis), this protein is ATP-dependent protease ATPase subunit HslU.